Here is a 188-residue protein sequence, read N- to C-terminus: Probable DNA-directed RNA polymerase subunit delta (188 aa).

An HTH HARE-type domain is found at 14 to 83 (LSMIEVARAI…GDNKWGLRSW (70 aa)). The disordered stretch occupies residues 117–188 (GDEDAIDYSD…EDDEDDEEEE (72 aa)).

Belongs to the RpoE family. In terms of assembly, RNAP is composed of a core of 2 alpha, a beta and a beta' subunits. The core is associated with a delta subunit and one of several sigma factors.

In terms of biological role, participates in both the initiation and recycling phases of transcription. In the presence of the delta subunit, RNAP displays an increased specificity of transcription, a decreased affinity for nucleic acids, and an increased efficiency of RNA synthesis because of enhanced recycling. The chain is Probable DNA-directed RNA polymerase subunit delta from Streptococcus uberis (strain ATCC BAA-854 / 0140J).